We begin with the raw amino-acid sequence, 510 residues long: 2,3-bisphosphoglycerate-independent phosphoglycerate mutase (510 aa).

Residues Asp-14 and Ser-64 each contribute to the Mn(2+) site. Ser-64 functions as the Phosphoserine intermediate in the catalytic mechanism. Substrate contacts are provided by residues His-125, 155 to 156 (RD), Arg-187, Arg-193, 259 to 262 (RADR), and Lys-332. 5 residues coordinate Mn(2+): Asp-399, His-403, Asp-440, His-441, and His-459.

The protein belongs to the BPG-independent phosphoglycerate mutase family. As to quaternary structure, monomer. Mn(2+) serves as cofactor.

It catalyses the reaction (2R)-2-phosphoglycerate = (2R)-3-phosphoglycerate. The protein operates within carbohydrate degradation; glycolysis; pyruvate from D-glyceraldehyde 3-phosphate: step 3/5. Functionally, catalyzes the interconversion of 2-phosphoglycerate and 3-phosphoglycerate. The polypeptide is 2,3-bisphosphoglycerate-independent phosphoglycerate mutase (Pseudomonas savastanoi pv. phaseolicola (strain 1448A / Race 6) (Pseudomonas syringae pv. phaseolicola (strain 1448A / Race 6))).